The following is a 197-amino-acid chain: ATP-dependent Clp protease proteolytic subunit (197 aa).

Ser-98 serves as the catalytic Nucleophile. Residue His-123 is part of the active site.

It belongs to the peptidase S14 family. As to quaternary structure, fourteen ClpP subunits assemble into 2 heptameric rings which stack back to back to give a disk-like structure with a central cavity, resembling the structure of eukaryotic proteasomes.

It localises to the cytoplasm. The enzyme catalyses Hydrolysis of proteins to small peptides in the presence of ATP and magnesium. alpha-casein is the usual test substrate. In the absence of ATP, only oligopeptides shorter than five residues are hydrolyzed (such as succinyl-Leu-Tyr-|-NHMec, and Leu-Tyr-Leu-|-Tyr-Trp, in which cleavage of the -Tyr-|-Leu- and -Tyr-|-Trp bonds also occurs).. Cleaves peptides in various proteins in a process that requires ATP hydrolysis. Has a chymotrypsin-like activity. Plays a major role in the degradation of misfolded proteins. This Natranaerobius thermophilus (strain ATCC BAA-1301 / DSM 18059 / JW/NM-WN-LF) protein is ATP-dependent Clp protease proteolytic subunit.